The sequence spans 320 residues: Aspartate carbamoyltransferase catalytic subunit (320 aa).

Residues arginine 68 and threonine 69 each coordinate carbamoyl phosphate. Lysine 96 is a binding site for L-aspartate. 3 residues coordinate carbamoyl phosphate: arginine 118, histidine 148, and glutamine 151. L-aspartate is bound by residues arginine 181 and arginine 236. Carbamoyl phosphate-binding residues include glycine 277 and proline 278.

It belongs to the aspartate/ornithine carbamoyltransferase superfamily. ATCase family. Heterododecamer (2C3:3R2) of six catalytic PyrB chains organized as two trimers (C3), and six regulatory PyrI chains organized as three dimers (R2).

The enzyme catalyses carbamoyl phosphate + L-aspartate = N-carbamoyl-L-aspartate + phosphate + H(+). Its pathway is pyrimidine metabolism; UMP biosynthesis via de novo pathway; (S)-dihydroorotate from bicarbonate: step 2/3. Functionally, catalyzes the condensation of carbamoyl phosphate and aspartate to form carbamoyl aspartate and inorganic phosphate, the committed step in the de novo pyrimidine nucleotide biosynthesis pathway. This is Aspartate carbamoyltransferase catalytic subunit from Leptothrix cholodnii (strain ATCC 51168 / LMG 8142 / SP-6) (Leptothrix discophora (strain SP-6)).